We begin with the raw amino-acid sequence, 420 residues long: F420-non-reducing hydrogenase vhu subunit A (420 aa).

Residues cysteine 61 and cysteine 64 each contribute to the Ni(2+) site.

The protein belongs to the [NiFe]/[NiFeSe] hydrogenase large subunit family. As to quaternary structure, the F420-non-reducing hydrogenase vhu is composed of four subunits; VhuA, VhuD, VhuG and VhuU. Ni(2+) serves as cofactor.

The protein is F420-non-reducing hydrogenase vhu subunit A (vhuA) of Methanococcus voltae.